The sequence spans 131 residues: Hydrogenase maturation factor HypA (131 aa).

H2 provides a ligand contact to Ni(2+). C74, C77, C91, and C94 together coordinate Zn(2+).

Belongs to the HypA/HybF family.

In terms of biological role, involved in the maturation of [NiFe] hydrogenases. Required for nickel insertion into the metal center of the hydrogenase. This Streptomyces avermitilis (strain ATCC 31267 / DSM 46492 / JCM 5070 / NBRC 14893 / NCIMB 12804 / NRRL 8165 / MA-4680) protein is Hydrogenase maturation factor HypA.